Reading from the N-terminus, the 273-residue chain is Phosphatidylglycerol--prolipoprotein diacylglyceryl transferase (273 aa).

3 helical membrane-spanning segments follow: residues 20-40 (LAVRWYALAYMVSFIIALPIA), 59-79 (FLFYAILGVLLGGRLGYVLFY), and 97-117 (GGMSFHGGALGVILALAYFSW). Arginine 142 provides a ligand contact to a 1,2-diacyl-sn-glycero-3-phospho-(1'-sn-glycerol). The next 2 helical transmembrane spans lie at 206-226 (FGFLSGLFLFGYACARSFCEF) and 243-263 (MGQLLCIPMALAGMGLMVYAM).

Belongs to the Lgt family.

It is found in the cell inner membrane. The catalysed reaction is L-cysteinyl-[prolipoprotein] + a 1,2-diacyl-sn-glycero-3-phospho-(1'-sn-glycerol) = an S-1,2-diacyl-sn-glyceryl-L-cysteinyl-[prolipoprotein] + sn-glycerol 1-phosphate + H(+). Its pathway is protein modification; lipoprotein biosynthesis (diacylglyceryl transfer). In terms of biological role, catalyzes the transfer of the diacylglyceryl group from phosphatidylglycerol to the sulfhydryl group of the N-terminal cysteine of a prolipoprotein, the first step in the formation of mature lipoproteins. In Gluconobacter oxydans (strain 621H) (Gluconobacter suboxydans), this protein is Phosphatidylglycerol--prolipoprotein diacylglyceryl transferase.